Consider the following 338-residue polypeptide: 5-dehydro-2-deoxygluconokinase (338 aa).

Belongs to the carbohydrate kinase PfkB family.

The enzyme catalyses 5-dehydro-2-deoxy-D-gluconate + ATP = 6-phospho-5-dehydro-2-deoxy-D-gluconate + ADP + H(+). The protein operates within polyol metabolism; myo-inositol degradation into acetyl-CoA; acetyl-CoA from myo-inositol: step 5/7. Catalyzes the phosphorylation of 5-dehydro-2-deoxy-D-gluconate (2-deoxy-5-keto-D-gluconate or DKG) to 6-phospho-5-dehydro-2-deoxy-D-gluconate (DKGP). The sequence is that of 5-dehydro-2-deoxygluconokinase from Mesomycoplasma hyopneumoniae (strain J / ATCC 25934 / NCTC 10110) (Mycoplasma hyopneumoniae).